The following is a 410-amino-acid chain: MRPENNLRLRLFQTMKFIALERLGLFVPIPGIDQKLFSSDYSNNAISNLLNVFDNNQAPKLSVFALGIIPYINATITIQILSSAFPALKKLQSEEGEIGKKKLNKITKYLSFCFAFIESLAIVLRLQKYAFDWNLYFIVQTTLILISGAMLVMWLADNISYKGIGTGASVIIFVNIASAFAKFLLNQLFVHSIKFLDFASYFALIVFSIACIVFVQEAIRKVPIISAKQLDSTSFYSNDYFLPLRINQGGVMPIILASSLLALVDYVIRYGLSTLQAVYFINDILPFKILFLLLYSAFIIFFNYLYCSLVLNCFELSNNLKKASVVIPSIRPGKMTEKFFKDTLDNLTLFGSGFLAFIVLAPNFLEFVFHIRVFKGLAVSSLLIVVGVAIDLIKQSKTYVIAKNYENMVH.

A run of 9 helical transmembrane segments spans residues 61–81 (LSVF…IQIL), 106–126 (ITKY…VLRL), 135–155 (LYFI…VMWL), 170–190 (VIIF…QLFV), 195–215 (FLDF…IVFV), 248–268 (QGGV…DYVI), 289–309 (ILFL…YCSL), 349–369 (LFGS…EFVF), and 373–393 (VFKG…IDLI).

It belongs to the SecY/SEC61-alpha family. Component of the plastid Sec protein translocase complex, which is composed of at least SecY and SecE.

The protein localises to the plastid. Its subcellular location is the chloroplast thylakoid membrane. Functionally, the central subunit of the protein translocation channel SecYE. Consists of two halves formed by TMs 1-5 and 6-10. These two domains form a lateral gate at the front which open onto the bilayer between TMs 2 and 7, and are clamped together by SecE at the back. The channel is closed by both a pore ring composed of hydrophobic SecY resides and a short helix (helix 2A) on the extracellular side of the membrane which forms a plug. The protein is Protein translocase subunit SecY of Cyanidium caldarium (Red alga).